Reading from the N-terminus, the 377-residue chain is Histidinol-phosphate aminotransferase 2 (377 aa).

The disordered stretch occupies residues 17-44 (NLSPYVPGEQPQHDDLCKLNTNENPFPP). Lys-228 carries the post-translational modification N6-(pyridoxal phosphate)lysine.

Belongs to the class-II pyridoxal-phosphate-dependent aminotransferase family. Histidinol-phosphate aminotransferase subfamily. In terms of assembly, homodimer. Requires pyridoxal 5'-phosphate as cofactor.

It carries out the reaction L-histidinol phosphate + 2-oxoglutarate = 3-(imidazol-4-yl)-2-oxopropyl phosphate + L-glutamate. The protein operates within amino-acid biosynthesis; L-histidine biosynthesis; L-histidine from 5-phospho-alpha-D-ribose 1-diphosphate: step 7/9. The sequence is that of Histidinol-phosphate aminotransferase 2 from Psychrobacter arcticus (strain DSM 17307 / VKM B-2377 / 273-4).